The chain runs to 262 residues: Inactive snake venom serine proteinase 13 (262 aa).

Residues 1–18 form the signal peptide; that stretch reads MGLIRVLANLLILQLSYA. The propeptide occupies 19 to 24; the sequence is QKSSEL. Positions 25–250 constitute a Peptidase S1 domain; it reads VIGGDECNIN…HLDWIQSIIA (226 aa). Disulfide bonds link Cys-31–Cys-162, Cys-49–Cys-65, Cys-97–Cys-257, Cys-141–Cys-211, Cys-173–Cys-190, and Cys-201–Cys-226. 3 N-linked (GlcNAc...) asparagine glycosylation sites follow: Asn-78, Asn-102, and Asn-153.

The protein belongs to the peptidase S1 family. Snake venom subfamily. In terms of assembly, monomer. As to expression, expressed by the venom gland.

The protein localises to the secreted. The polypeptide is Inactive snake venom serine proteinase 13 (Crotalus adamanteus (Eastern diamondback rattlesnake)).